Reading from the N-terminus, the 177-residue chain is Large ribosomal subunit protein uL6 (177 aa).

Belongs to the universal ribosomal protein uL6 family. As to quaternary structure, part of the 50S ribosomal subunit.

In terms of biological role, this protein binds to the 23S rRNA, and is important in its secondary structure. It is located near the subunit interface in the base of the L7/L12 stalk, and near the tRNA binding site of the peptidyltransferase center. The chain is Large ribosomal subunit protein uL6 from Erwinia tasmaniensis (strain DSM 17950 / CFBP 7177 / CIP 109463 / NCPPB 4357 / Et1/99).